The following is a 277-amino-acid chain: Venom serine protease (277 aa).

The first 19 residues, M1 to S19, serve as a signal peptide directing secretion. Positions I34–I269 constitute a Peptidase S1 domain. C60 and C76 form a disulfide bridge. H75 (charge relay system) is an active-site residue. 2 N-linked (GlcNAc...) asparagine glycosylation sites follow: N84 and N104. Catalysis depends on D126, which acts as the Charge relay system. N-linked (GlcNAc...) asparagine glycosylation is found at N155 and N158. 2 disulfides stabilise this stretch: C192/C207 and C216/C246. The N-linked (GlcNAc...) asparagine glycan is linked to N218. S220 functions as the Charge relay system in the catalytic mechanism. N266 carries N-linked (GlcNAc...) asparagine glycosylation.

This sequence belongs to the peptidase S1 family. Expressed by the venom duct.

The protein localises to the secreted. The protein is Venom serine protease of Polistes dominula (European paper wasp).